The primary structure comprises 254 residues: Ankyrin repeat domain-containing protein 7 (254 aa).

ANK repeat units follow at residues 58–87, 91–120, 124–153, 157–186, and 190–219; these read KYRT…KINV, ENKS…DPDL, RYNT…DLEA, DGYT…DVNA, and YQRT…ELCY.

Testis specific.

The sequence is that of Ankyrin repeat domain-containing protein 7 (ANKRD7) from Homo sapiens (Human).